The chain runs to 454 residues: PC-esterase domain-containing protein 1A (454 aa).

It belongs to the PC-esterase family.

The polypeptide is PC-esterase domain-containing protein 1A (PCED1A) (Homo sapiens (Human)).